Consider the following 95-residue polypeptide: MALRPLHDRVIVKRLDNERKTASGIVIPDSAAEKPDQGEVVAVGPGKKTEDGKVLPVDLKAGDKVLFGKYAGQSVKVDGEELLVIREEEILAVIQ.

It belongs to the GroES chaperonin family. As to quaternary structure, heptamer of 7 subunits arranged in a ring. Interacts with the chaperonin GroEL.

It is found in the cytoplasm. Functionally, together with the chaperonin GroEL, plays an essential role in assisting protein folding. The GroEL-GroES system forms a nano-cage that allows encapsulation of the non-native substrate proteins and provides a physical environment optimized to promote and accelerate protein folding. GroES binds to the apical surface of the GroEL ring, thereby capping the opening of the GroEL channel. This chain is Co-chaperonin GroES, found in Bordetella petrii (strain ATCC BAA-461 / DSM 12804 / CCUG 43448).